We begin with the raw amino-acid sequence, 190 residues long: Potassium-transporting ATPase KdpC subunit (190 aa).

A helical membrane pass occupies residues 10 to 30 (TFLFLLLITGGVYPLLTTALG).

Belongs to the KdpC family. In terms of assembly, the system is composed of three essential subunits: KdpA, KdpB and KdpC.

It is found in the cell inner membrane. Its function is as follows. Part of the high-affinity ATP-driven potassium transport (or Kdp) system, which catalyzes the hydrolysis of ATP coupled with the electrogenic transport of potassium into the cytoplasm. This subunit acts as a catalytic chaperone that increases the ATP-binding affinity of the ATP-hydrolyzing subunit KdpB by the formation of a transient KdpB/KdpC/ATP ternary complex. The chain is Potassium-transporting ATPase KdpC subunit from Shigella flexneri serotype 5b (strain 8401).